A 296-amino-acid polypeptide reads, in one-letter code: Large ribosomal subunit protein uL15m (296 aa).

The N-terminal 21 residues, 1–21, are a transit peptide targeting the mitochondrion; the sequence is MAGPLQGGGARALDLLRGLPR. Residues 22 to 66 are disordered; the sequence is VSLANLKPNPGSKKPERRPRGRRRGRKCGRGHKGERQRGTRPRLG. Residues 36–52 show a composition bias toward basic residues; the sequence is PERRPRGRRRGRKCGRG.

It belongs to the universal ribosomal protein uL15 family. As to quaternary structure, component of the mitochondrial large ribosomal subunit (mt-LSU). Mature mammalian 55S mitochondrial ribosomes consist of a small (28S) and a large (39S) subunit. The 28S small subunit contains a 12S ribosomal RNA (12S mt-rRNA) and 30 different proteins. The 39S large subunit contains a 16S rRNA (16S mt-rRNA), a copy of mitochondrial valine transfer RNA (mt-tRNA(Val)), which plays an integral structural role, and 52 different proteins.

The protein localises to the mitochondrion. The sequence is that of Large ribosomal subunit protein uL15m (MRPL15) from Homo sapiens (Human).